The primary structure comprises 832 residues: Protein P (832 aa).

Positions 1–177 (MPLSYQHFRR…FCGSPYSWEQ (177 aa)) are terminal protein domain (TP). The segment at 178–335 (ELQHGAESFH…YCLSHIVNLL (158 aa)) is spacer. A disordered region spans residues 241–263 (RRPFGVEPSGSGHTTNLASKSAS). Residues 251–263 (SGHTTNLASKSAS) are compositionally biased toward polar residues. Residues 336-679 (EDWGPCAEHG…YLNLYPVARQ (344 aa)) are polymerase/reverse transcriptase domain (RT). The region spanning 346-589 (EHHIRIPRTP…YSLHFMGYVI (244 aa)) is the Reverse transcriptase domain. Mg(2+) is bound by residues Asp-418, Asp-540, and Asp-541.

It belongs to the hepadnaviridae P protein family.

The enzyme catalyses DNA(n) + a 2'-deoxyribonucleoside 5'-triphosphate = DNA(n+1) + diphosphate. It carries out the reaction Endonucleolytic cleavage to 5'-phosphomonoester.. With respect to regulation, activated by host HSP70 and HSP40 in vitro to be able to bind the epsilon loop of the pgRNA. Because deletion of the RNase H region renders the protein partly chaperone-independent, the chaperones may be needed indirectly to relieve occlusion of the RNA-binding site by this domain. Inhibited by several reverse-transcriptase inhibitors: Lamivudine, Adefovir and Entecavir. Multifunctional enzyme that converts the viral RNA genome into dsDNA in viral cytoplasmic capsids. This enzyme displays a DNA polymerase activity that can copy either DNA or RNA templates, and a ribonuclease H (RNase H) activity that cleaves the RNA strand of RNA-DNA heteroduplexes in a partially processive 3'- to 5'-endonucleasic mode. Neo-synthesized pregenomic RNA (pgRNA) are encapsidated together with the P protein, and reverse-transcribed inside the nucleocapsid. Initiation of reverse-transcription occurs first by binding the epsilon loop on the pgRNA genome, and is initiated by protein priming, thereby the 5'-end of (-)DNA is covalently linked to P protein. Partial (+)DNA is synthesized from the (-)DNA template and generates the relaxed circular DNA (RC-DNA) genome. After budding and infection, the RC-DNA migrates in the nucleus, and is converted into a plasmid-like covalently closed circular DNA (cccDNA). The activity of P protein does not seem to be necessary for cccDNA generation, and is presumably released from (+)DNA by host nuclear DNA repair machinery. This is Protein P from Homo sapiens (Human).